A 163-amino-acid polypeptide reads, in one-letter code: MINKKQSLTLLSAIALSVSLSACSVFDWLIYKPDIPQGNYMEPQQVEKLRIDMTKEQAEYILGRPVLRDSFADDTWYYVYHYKSGRDASITHKELILHFTGNKLSLVKGDYELSPEFNTPLEQSKLPMVNTTESAPQVPAQRPDEKPLVKENQTEAQVQKPIK.

A signal peptide spans 1–22 (MINKKQSLTLLSAIALSVSLSA). A lipid anchor (N-palmitoyl cysteine) is attached at C23. C23 carries the S-diacylglycerol cysteine lipid modification. The tract at residues 122–163 (EQSKLPMVNTTESAPQVPAQRPDEKPLVKENQTEAQVQKPIK) is disordered. Residues 142–153 (RPDEKPLVKENQ) are compositionally biased toward basic and acidic residues.

This sequence belongs to the BamE family. As to quaternary structure, part of the Bam complex.

The protein localises to the cell outer membrane. In terms of biological role, part of the outer membrane protein assembly complex, which is involved in assembly and insertion of beta-barrel proteins into the outer membrane. The sequence is that of Outer membrane protein assembly factor BamE from Shewanella oneidensis (strain ATCC 700550 / JCM 31522 / CIP 106686 / LMG 19005 / NCIMB 14063 / MR-1).